Here is a 480-residue protein sequence, read N- to C-terminus: Cysteine--tRNA ligase (480 aa).

Cys-29 contributes to the Zn(2+) binding site. A 'HIGH' region motif is present at residues 31–41 (PTVYADPHLGH). Zn(2+) is bound by residues Cys-220, His-245, and Glu-249. The short motif at 276 to 280 (KMAKS) is the 'KMSKS' region element. Residue Lys-279 coordinates ATP.

Belongs to the class-I aminoacyl-tRNA synthetase family. As to quaternary structure, monomer. The cofactor is Zn(2+).

It is found in the cytoplasm. It catalyses the reaction tRNA(Cys) + L-cysteine + ATP = L-cysteinyl-tRNA(Cys) + AMP + diphosphate. In Thermus thermophilus (strain ATCC 27634 / DSM 579 / HB8), this protein is Cysteine--tRNA ligase.